Here is a 462-residue protein sequence, read N- to C-terminus: MNTRIERDTLGEMHVPQDKLWGAQTQRSYENFHIGTEKMPMEIIYAFALLKKAAANVNKKLGQLSAEKADAITWAANEVLAGKHDDHFPLFVWQTGSGTQSNMNMNEVLARRGNQLLQEKGLDVTIHPNDDVNRSQSSNDTFPTAMHIAAYNKLDDHLLPTLQMFKQTLHQKAKQFDDVIKLGRTHLQDATPLTLGQEISGWARMLEKTEQMIRESMIYLQELAIGGTAVGTGVNAHPKFGEMVAADIANETGKPFKSAANKFHALTSHDELVHTHGALKALAADLFKIANDIRWLASGPRGGLGELIIPANEPGSSIMPGKVNPTQSEALTMITSQVIGNDATIAFAASQGNFELNVFKPVIIYNFLQSTTLLTDGLRTFHDKCLIGLEANETIIKKHLNESLMLVTALNPHIGYENAAKIAKKAHAEGLTLKEAAMQSGLLTEEEFEKMVDPAKMVHPQG.

Residues 97–99, 127–130, 137–139, and Thr-185 contribute to the substrate site; these read SGT, HPND, and SSN. His-186 acts as the Proton donor/acceptor in catalysis. The active site involves Ser-316. Substrate contacts are provided by residues Ser-317 and 322 to 324; that span reads KVN.

This sequence belongs to the class-II fumarase/aspartase family. Fumarase subfamily. As to quaternary structure, homotetramer.

Its subcellular location is the cytoplasm. It catalyses the reaction (S)-malate = fumarate + H2O. It functions in the pathway carbohydrate metabolism; tricarboxylic acid cycle; (S)-malate from fumarate: step 1/1. Its function is as follows. Involved in the TCA cycle. Catalyzes the stereospecific interconversion of fumarate to L-malate. This Halalkalibacterium halodurans (strain ATCC BAA-125 / DSM 18197 / FERM 7344 / JCM 9153 / C-125) (Bacillus halodurans) protein is Fumarate hydratase class II.